Reading from the N-terminus, the 660-residue chain is Glycine betaine transporter (660 aa).

Over 1-13 (MPSKTSSRFANIN) the chain is Cytoplasmic. The helical transmembrane segment at 14-34 (PNVFVSTIMIIAIFLAIVILA) threads the bilayer. Residues 35-52 (PDAFELLTQQLKNWITES) lie on the Periplasmic side of the membrane. A helical membrane pass occupies residues 53–73 (FSWFYVLSVAFFLIVLGYIAC). Residues 74–93 (SSSGKIKLGPDHSQPDYSNS) lie on the Cytoplasmic side of the membrane. The chain crosses the membrane as a helical span at residues 94–114 (SWFAMLFTAGMGIGLMFFGIA). The Periplasmic segment spans residues 115-139 (EPIMHYVSPPSGEPETILAAQQSMR). A helical membrane pass occupies residues 140-160 (VTFFHWGLHAWGIYAIVALSL). Residues 161 to 195 (SYFAYRHDLPLKIRSSLYPLIGKKIYGPMGDAVDT) are Cytoplasmic-facing. Residues 196–216 (FATIGTIFGVATTLGFGVTQI) form a helical membrane-spanning segment. The Periplasmic portion of the chain corresponds to 217–230 (SSGLNYLFGFEPTS). Residues 231-251 (FSKVVLIIIVSAMAALSVGLG) traverse the membrane as a helical segment. Residues 252 to 263 (LDKGVKRLAELN) are Cytoplasmic-facing. Residues 264–284 (LVLAVTLLAFVFFTSATVYLL) form a helical membrane-spanning segment. The Periplasmic segment spans residues 285-316 (QTTIQNTGQYISNLFEMTFNLYAYQPNGWIGG). Residues 317–337 (WTIMYWAWWISWSPFVGMFIA) form a helical membrane-spanning segment. Topologically, residues 338–347 (RVSRGRTIRE) are cytoplasmic. Residues 348–368 (FIIGVMLIPTGFTLIWMGFMG) form a helical membrane-spanning segment. The Periplasmic segment spans residues 369 to 401 (NAGLYSILHDGNLSLLNAVQRDSSVALFEFLHS). The helical transmembrane segment at 402–422 (LPFSGVMSLLATVLVVLFFVT) threads the bilayer. Residues 423–446 (SADSGALVVDYLTAKSEDSPVWQR) lie on the Cytoplasmic side of the membrane. Residues 447-467 (LFWIVVMAGLAIILLLAGGLT) traverse the membrane as a helical segment. Over 468-471 (ALQS) the chain is Periplasmic. The helical transmembrane segment at 472–492 (ATIMSALPFTFIMLLICWGLI) threads the bilayer. The Cytoplasmic portion of the chain corresponds to 493-660 (KALRIDSTKM…LSVMRAQTGN (168 aa)).

It belongs to the BCCT transporter (TC 2.A.15) family.

The protein resides in the cell inner membrane. Uptake is activated by NaCl, KCl or mannose gradients across the cell membrane. Inhibited by the protonophore 3,3',4',5-tetrachlorosalicylanilide (TCS). In terms of biological role, energy-dependent uptake of glycine betaine in response to high salinity. The sequence is that of Glycine betaine transporter from Acinetobacter baylyi (strain ATCC 33305 / BD413 / ADP1).